We begin with the raw amino-acid sequence, 326 residues long: Acetyl-coenzyme A carboxylase carboxyl transferase subunit beta (326 aa).

In terms of domain architecture, CoA carboxyltransferase N-terminal spans 32–301 (LWTKCPACGV…ILPPLNADSN (270 aa)). Residues C36, C39, C55, and C58 each coordinate Zn(2+). A C4-type zinc finger spans residues 36–58 (CPACGVLTYTKDLQGNWMVCVEC).

The protein belongs to the AccD/PCCB family. In terms of assembly, acetyl-CoA carboxylase is a heterohexamer composed of biotin carboxyl carrier protein (AccB), biotin carboxylase (AccC) and two subunits each of ACCase subunit alpha (AccA) and ACCase subunit beta (AccD). Zn(2+) serves as cofactor.

The protein localises to the cytoplasm. The catalysed reaction is N(6)-carboxybiotinyl-L-lysyl-[protein] + acetyl-CoA = N(6)-biotinyl-L-lysyl-[protein] + malonyl-CoA. It functions in the pathway lipid metabolism; malonyl-CoA biosynthesis; malonyl-CoA from acetyl-CoA: step 1/1. Component of the acetyl coenzyme A carboxylase (ACC) complex. Biotin carboxylase (BC) catalyzes the carboxylation of biotin on its carrier protein (BCCP) and then the CO(2) group is transferred by the transcarboxylase to acetyl-CoA to form malonyl-CoA. This Synechocystis sp. (strain ATCC 27184 / PCC 6803 / Kazusa) protein is Acetyl-coenzyme A carboxylase carboxyl transferase subunit beta.